A 118-amino-acid polypeptide reads, in one-letter code: Large ribosomal subunit protein bL21c (118 aa).

It belongs to the bacterial ribosomal protein bL21 family. In terms of assembly, part of the 50S ribosomal subunit.

Its subcellular location is the plastid. It is found in the chloroplast. This protein binds to 23S rRNA. The sequence is that of Large ribosomal subunit protein bL21c from Zygnema circumcarinatum (Green alga).